A 288-amino-acid chain; its full sequence is Centromere protein P (288 aa).

The stretch at 1-71 (MDAELAEVRA…HLESELSFLS (71 aa)) forms a coiled coil. Phosphoserine is present on Ser-38.

It belongs to the CENP-P/CTF19 family. Component of the CENPA-CAD complex, composed of CENPI, CENPK, CENPL, CENPO, CENPP, CENPQ, CENPR and CENPS. The CENPA-CAD complex interacts with the CENPA-NAC complex, at least composed of CENPA, CENPC, CENPH, CENPM, CENPN, CENPT and CENPU.

The protein localises to the nucleus. It localises to the chromosome. The protein resides in the centromere. Component of the CENPA-CAD (nucleosome distal) complex, a complex recruited to centromeres which is involved in assembly of kinetochore proteins, mitotic progression and chromosome segregation. May be involved in incorporation of newly synthesized CENPA into centromeres via its interaction with the CENPA-NAC complex. This Homo sapiens (Human) protein is Centromere protein P (CENPP).